The sequence spans 144 residues: Urease subunit beta (144 aa).

Low complexity predominate over residues 110–119 (HAAPAAPAIP). A disordered region spans residues 110-144 (HAAPAAPAIPARHESAAGDAPSPLKERAGFDNETR). Residues 133-144 (LKERAGFDNETR) are compositionally biased toward basic and acidic residues.

The protein belongs to the urease beta subunit family. In terms of assembly, heterotrimer of UreA (gamma), UreB (beta) and UreC (alpha) subunits. Three heterotrimers associate to form the active enzyme.

Its subcellular location is the cytoplasm. The enzyme catalyses urea + 2 H2O + H(+) = hydrogencarbonate + 2 NH4(+). The protein operates within nitrogen metabolism; urea degradation; CO(2) and NH(3) from urea (urease route): step 1/1. The polypeptide is Urease subunit beta (Micrococcus luteus (strain ATCC 4698 / DSM 20030 / JCM 1464 / CCM 169 / CCUG 5858 / IAM 1056 / NBRC 3333 / NCIMB 9278 / NCTC 2665 / VKM Ac-2230) (Micrococcus lysodeikticus)).